The sequence spans 196 residues: Carnitine operon protein CaiE (196 aa).

Residues 173-196 are disordered; that stretch reads TQPLRQMEENRPRLQGTTDVTPKR. Residues 187-196 show a composition bias toward polar residues; it reads QGTTDVTPKR.

Belongs to the transferase hexapeptide repeat family.

It participates in amine and polyamine metabolism; carnitine metabolism. Functionally, overproduction of CaiE stimulates the activity of CaiB and CaiD. In Escherichia coli O139:H28 (strain E24377A / ETEC), this protein is Carnitine operon protein CaiE.